The sequence spans 3096 residues: Cilia- and flagella-associated protein 54 (3096 aa).

A compositionally biased stretch (low complexity) spans 1–45; that stretch reads MAAQGSPSSSPSDDSTTSGSLPELPPTSTATSRSPPESKGSSRSS. Disordered regions lie at residues 1-46 and 1248-1267; these read MAAQ…RSSL and SNEQ…LKTK.

Belongs to the CFAP54 family.

It is found in the cytoplasm. It localises to the cytoskeleton. The protein resides in the cilium axoneme. Required for assembly and function of cilia and flagella. This chain is Cilia- and flagella-associated protein 54, found in Homo sapiens (Human).